A 226-amino-acid polypeptide reads, in one-letter code: Cytidylate kinase (226 aa).

12 to 20 (GPSGAGKGT) lines the ATP pocket.

This sequence belongs to the cytidylate kinase family. Type 1 subfamily.

It is found in the cytoplasm. It carries out the reaction CMP + ATP = CDP + ADP. The catalysed reaction is dCMP + ATP = dCDP + ADP. This chain is Cytidylate kinase, found in Vibrio parahaemolyticus serotype O3:K6 (strain RIMD 2210633).